We begin with the raw amino-acid sequence, 243 residues long: Uridylate kinase (243 aa).

12-15 (KLSG) is an ATP binding site. The tract at residues 20-25 (GAKGFG) is involved in allosteric activation by GTP. Residues glycine 55 and arginine 59 each contribute to the ATP site. Residues aspartate 74 and 135 to 142 (TGNPYFTT) each bind UMP. 3 residues coordinate ATP: glutamine 163, tyrosine 169, and aspartate 172.

This sequence belongs to the UMP kinase family. Homohexamer.

The protein localises to the cytoplasm. The catalysed reaction is UMP + ATP = UDP + ADP. It participates in pyrimidine metabolism; CTP biosynthesis via de novo pathway; UDP from UMP (UMPK route): step 1/1. Allosterically activated by GTP. Inhibited by UTP. In terms of biological role, catalyzes the reversible phosphorylation of UMP to UDP. This chain is Uridylate kinase, found in Symbiobacterium thermophilum (strain DSM 24528 / JCM 14929 / IAM 14863 / T).